The chain runs to 126 residues: Small ribosomal subunit protein uS13 (126 aa).

The disordered stretch occupies residues 96-126 (LPVHGQRTHTNARTRKGPRRAIAGKKKAGKK).

Belongs to the universal ribosomal protein uS13 family. In terms of assembly, part of the 30S ribosomal subunit. Forms a loose heterodimer with protein S19. Forms two bridges to the 50S subunit in the 70S ribosome.

In terms of biological role, located at the top of the head of the 30S subunit, it contacts several helices of the 16S rRNA. In the 70S ribosome it contacts the 23S rRNA (bridge B1a) and protein L5 of the 50S subunit (bridge B1b), connecting the 2 subunits; these bridges are implicated in subunit movement. Contacts the tRNAs in the A and P-sites. The protein is Small ribosomal subunit protein uS13 of Frankia alni (strain DSM 45986 / CECT 9034 / ACN14a).